The chain runs to 554 residues: Calcium-dependent protein kinase 3 (554 aa).

A disordered region spans residues 30-55 (KKKSSNKSIKSQHKFEGSKIANKNNE). Residues 110–365 (NLSEEPLGKG…ASEALKHPWF (256 aa)) enclose the Protein kinase domain. Residues 116–124 (LGKGTYGCV) and Lys-139 each bind ATP. Asp-230 acts as the Proton acceptor in catalysis. Positions 385-393 (NFKNYALLL) match the J domain autoinhibitory motif motif. Residues 385 to 420 (NFKNYALLLKLQKLAMTIIAQQSNDYDLQQLKTVFL) form a j domain region. A J domain EF-hand interaction motif motif is present at residues 394–403 (KLQKLAMTII). EF-hand domains follow at residues 410-445 (YDLQQLKTVFLYLDEDGKGNITKNQLKKGLENSGLK), 448-479 (QNFDVLLDQIDSDGSGRIDYTEFLAAALDRKH), 480-515 (LSKKLIYCAFRVFDVDNDGEITTAELAHILYNGNKK), and 521-554 (KDVNQVKKMIQEVDKNNDGKIDFYEFCEMMKLKY). Ca(2+)-binding residues include Asp-458, Asp-460, Ser-462, Arg-464, Glu-469, Asp-493, Asp-495, Asp-497, Glu-499, Glu-504, Asp-534, Asn-536, Asp-538, Lys-540, and Glu-545.

The protein belongs to the protein kinase superfamily. Ser/Thr protein kinase family. CDPK subfamily. The cofactor is Mg(2+).

The protein resides in the cytoplasm. It catalyses the reaction L-seryl-[protein] + ATP = O-phospho-L-seryl-[protein] + ADP + H(+). The catalysed reaction is L-threonyl-[protein] + ATP = O-phospho-L-threonyl-[protein] + ADP + H(+). With respect to regulation, activated by calcium. Upon calcium binding to the EF-hand domain 2, the C-terminus of the junction domain (J domain) undergoes a conformational change which results in the dissociation of the pseudo-substrate inhibitory motif from the catalytic domain. This, in turn, may facilitate the autophosphorylation of the activation loop at Thr-271, which leads to the kinase activation. Functionally, calcium-dependent protein kinase which acts as a sensor and effector of intracellular Ca(2+) levels probably in part downstream of cGMP-activated PKG kinase. In the mosquito midgut, regulates the gliding motility of the ookinete which is essential for the ookinete to invade the midgut epithelium. However, another study showed that while required for ookinete invasion of the midgut epithelium, is not required for ookinete gliding motility. The polypeptide is Calcium-dependent protein kinase 3 (Plasmodium berghei (strain Anka)).